We begin with the raw amino-acid sequence, 194 residues long: Thiol:disulfide interchange protein CycY (194 aa).

Positions 1 to 37 (MSEQSTSANPQRRTFLMVLPLIAFIGLALLFWFRLGS) are cleaved as a signal peptide. In terms of domain architecture, Thioredoxin spans 46–190 (ALIGRPAPQT…LRSVLLPQME (145 aa)). C92 and C95 are disulfide-bonded.

This sequence belongs to the thioredoxin family. DsbE subfamily.

The protein resides in the periplasm. Required for disulfide bond formation in some periplasmic proteins. Also acts as a disulfide oxidoreductase in cytochromes c biogenesis. The cysteines of apocytochromes c must be in the reduced state for covalent linkage between the two moieties to occur. In Bradyrhizobium diazoefficiens (strain JCM 10833 / BCRC 13528 / IAM 13628 / NBRC 14792 / USDA 110), this protein is Thiol:disulfide interchange protein CycY (cycY).